Reading from the N-terminus, the 248-residue chain is tRNA pseudouridine synthase A (248 aa).

Catalysis depends on Asp-53, which acts as the Nucleophile. A substrate-binding site is contributed by Tyr-111.

The protein belongs to the tRNA pseudouridine synthase TruA family. In terms of assembly, homodimer.

It catalyses the reaction uridine(38/39/40) in tRNA = pseudouridine(38/39/40) in tRNA. Its function is as follows. Formation of pseudouridine at positions 38, 39 and 40 in the anticodon stem and loop of transfer RNAs. This is tRNA pseudouridine synthase A from Listeria monocytogenes serovar 1/2a (strain ATCC BAA-679 / EGD-e).